We begin with the raw amino-acid sequence, 195 residues long: ADP-ribosylation factor L (195 aa).

A lipid anchor (N-myristoyl glycine) is attached at Gly-2. Residues Gly-25 to Thr-32, Asp-72 to Pro-76, and Asn-131 to Asp-134 contribute to the GTP site.

This sequence belongs to the small GTPase superfamily. Arf family.

In terms of biological role, may be involved in trafficking events within the endosomal system. The protein is ADP-ribosylation factor L (arrL) of Dictyostelium discoideum (Social amoeba).